We begin with the raw amino-acid sequence, 112 residues long: Large ribosomal subunit protein mL53 (112 aa).

It belongs to the mitochondrion-specific ribosomal protein mL53 family. In terms of assembly, component of the mitochondrial large ribosomal subunit (mt-LSU). Mature mammalian 55S mitochondrial ribosomes consist of a small (28S) and a large (39S) subunit. The 28S small subunit contains a 12S ribosomal RNA (12S mt-rRNA) and 30 different proteins. The 39S large subunit contains a 16S rRNA (16S mt-rRNA), a copy of mitochondrial valine transfer RNA (mt-tRNA(Val)), which plays an integral structural role, and 52 different proteins. mL53 is located at the L7/L12 stalk.

It is found in the mitochondrion. This Homo sapiens (Human) protein is Large ribosomal subunit protein mL53 (MRPL53).